The chain runs to 1401 residues: MAP kinase kinase kinase wis4 (1401 aa).

2 disordered regions span residues 67–99 and 176–205; these read HIPLTPSHSGQSEKLMSTRTSHSPYISPTMSYT and QDSISDKSLPSTNQSLHHSEEDTESDNDFS. Composition is skewed to polar residues over residues 72 to 99 and 176 to 191; these read PSHSGQSEKLMSTRTSHSPYISPTMSYT and QDSISDKSLPSTNQSL. One can recognise a Protein kinase domain in the interval 1037 to 1306; that stretch reads WQQGHFVRSG…AVDLLTHPWI (270 aa). ATP-binding positions include 1043-1051 and K1066; that span reads VRSGMFGDV. Residue D1161 is the Proton acceptor of the active site.

The protein belongs to the protein kinase superfamily. STE Ser/Thr protein kinase family. MAP kinase kinase kinase subfamily.

The catalysed reaction is L-seryl-[protein] + ATP = O-phospho-L-seryl-[protein] + ADP + H(+). The enzyme catalyses L-threonyl-[protein] + ATP = O-phospho-L-threonyl-[protein] + ADP + H(+). Its function is as follows. Involved in a signal transduction pathway that is activated in under conditions of heat shock, oxidative stress or limited nutrition. Unlike win1, it is not activated by changes in the osmolarity of the extracellular environment. Activates the wis1 MAP kinase kinase by phosphorylation. This is MAP kinase kinase kinase wis4 (wis4) from Schizosaccharomyces pombe (strain 972 / ATCC 24843) (Fission yeast).